The primary structure comprises 416 residues: Cell division control protein 3 (416 aa).

Residues 32-307 (RGFSLNIMAI…ENYRTEKLKR (276 aa)) form the Septin-type G domain. Positions 42–49 (GESGLGKA) are G1 motif. GTP contacts are provided by residues 42 to 49 (GESGLGKA), serine 79, glycine 105, 184 to 192 (KSDTLTDEE), glycine 240, and arginine 256. The segment at 102-105 (TAPG) is G3 motif. Positions 183-186 (AKSD) are G4 motif. Residues 323–399 (AAKQEEERAL…QLEKQKLLPQ (77 aa)) adopt a coiled-coil conformation. Residues 392 to 416 (EKQKLLPQDPPAQPAPQKSRKGFLR) form a disordered region.

It belongs to the TRAFAC class TrmE-Era-EngA-EngB-Septin-like GTPase superfamily. Septin GTPase family.

It localises to the bud neck. Its function is as follows. Plays a role in the cell cycle. Involved in the formation of the ring of filaments in the neck region at the mother-bud junction during mitosis. This chain is Cell division control protein 3 (CDC3), found in Candida albicans (Yeast).